The sequence spans 142 residues: MTRRPSNLDPAIAARLKRDEHGLFPAVAQQYDTGEVLMVGWMDDEALHRTLTTGRCTYWSRSRQEYWVKGETSGHQQWVKSVALDCDGDTVLVKVDQIGAACHTGDRTCFDAGQLPAVVGEPPTPVGAGERQPASGTADAAP.

D85 contacts Mg(2+). C86 provides a ligand contact to Zn(2+). D87 and D89 together coordinate Mg(2+). Zn(2+) contacts are provided by C102 and C109. The disordered stretch occupies residues 120 to 142 (GEPPTPVGAGERQPASGTADAAP).

This sequence belongs to the PRA-CH family. As to quaternary structure, homodimer. Mg(2+) is required as a cofactor. It depends on Zn(2+) as a cofactor.

Its subcellular location is the cytoplasm. The catalysed reaction is 1-(5-phospho-beta-D-ribosyl)-5'-AMP + H2O = 1-(5-phospho-beta-D-ribosyl)-5-[(5-phospho-beta-D-ribosylamino)methylideneamino]imidazole-4-carboxamide. It functions in the pathway amino-acid biosynthesis; L-histidine biosynthesis; L-histidine from 5-phospho-alpha-D-ribose 1-diphosphate: step 3/9. Catalyzes the hydrolysis of the adenine ring of phosphoribosyl-AMP. This is Phosphoribosyl-AMP cyclohydrolase from Acidothermus cellulolyticus (strain ATCC 43068 / DSM 8971 / 11B).